We begin with the raw amino-acid sequence, 157 residues long: SUMO-conjugating enzyme UBC9 (157 aa).

Ser2 bears the N-acetylserine mark. The 154-residue stretch at 4-157 folds into the UBC core domain; sequence LCLQRLQEER…VLLQAKQYSK (154 aa). Residue Cys93 is the Glycyl thioester intermediate of the active site.

The protein belongs to the ubiquitin-conjugating enzyme family. As to quaternary structure, interacts with SIZ1.

It localises to the nucleus. It participates in protein modification; protein sumoylation. Functionally, E2 ubiquitin-like--protein ligase mediating SUMO/Smt3 attachment to septins and PCNA. Seems to be involved in degradation of S- (CLB5) and M-phase cyclins (CLB2). This chain is SUMO-conjugating enzyme UBC9 (UBC9), found in Saccharomyces cerevisiae (strain ATCC 204508 / S288c) (Baker's yeast).